A 116-amino-acid polypeptide reads, in one-letter code: Cocaine- and amphetamine-regulated transcript protein (116 aa).

The N-terminal stretch at 1–27 is a signal peptide; it reads MESPRLRLLPLLGAALLLLLPLLGALA. A Phosphotyrosine modification is found at tyrosine 41. Phosphoserine is present on serine 48. Cystine bridges form between cysteine 82-cysteine 100, cysteine 88-cysteine 108, and cysteine 102-cysteine 115.

It belongs to the CART family.

Its subcellular location is the secreted. Its function is as follows. Satiety factor closely associated with the actions of leptin and neuropeptide y; this anorectic peptide inhibits both normal and starvation-induced feeding and completely blocks the feeding response induced by neuropeptide Y and regulated by leptin in the hypothalamus. The sequence is that of Cocaine- and amphetamine-regulated transcript protein (CARTPT) from Bos taurus (Bovine).